Here is a 443-residue protein sequence, read N- to C-terminus: Glutamyl-tRNA reductase (443 aa).

Residues 49-52 (TCNR), S109, 114-116 (EQQ), and Q120 each bind substrate. The active-site Nucleophile is C50. 189 to 194 (GAGSMG) contributes to the NADP(+) binding site.

Belongs to the glutamyl-tRNA reductase family. Homodimer.

The enzyme catalyses (S)-4-amino-5-oxopentanoate + tRNA(Glu) + NADP(+) = L-glutamyl-tRNA(Glu) + NADPH + H(+). The protein operates within porphyrin-containing compound metabolism; protoporphyrin-IX biosynthesis; 5-aminolevulinate from L-glutamyl-tRNA(Glu): step 1/2. Catalyzes the NADPH-dependent reduction of glutamyl-tRNA(Glu) to glutamate 1-semialdehyde (GSA). The sequence is that of Glutamyl-tRNA reductase from Mycobacteroides abscessus (strain ATCC 19977 / DSM 44196 / CCUG 20993 / CIP 104536 / JCM 13569 / NCTC 13031 / TMC 1543 / L948) (Mycobacterium abscessus).